Consider the following 395-residue polypeptide: MAKQRFERTKPHVNIGTIGHVDHGKTTLTAAITKVLAEKGKAQFMAYDAIDKAPEERERGITINTSHVEYETDARHYAHVDCPGHADYVKNMITGAAQMDGAILVVSAADGPMPQTREHILLARQVGVPAIVVFLNKCDMVDDEELLELVELEVRELLNQYEFPGDEIPFIRGSALKALEGDPKYVKAIEELMDAVDSYIPTPQRDADKPFLMPIEDVFTITGRGTVVTGRVERGKCKVGDQVEIVGLREESKTTVVTGLEMFRKILDEVQAGDNVGALLRGIEKKEVERGQVLAKPGSIKPHTKFSGAIYVLTKEEGGRHSPFFNGYRPQFYFRTTDVTGTIKLPEGVEMVMPGDNVEIAVELIHPIAIEEGLRFAVREGGRTVASGRVTKVSE.

The 195-residue stretch at 10-204 (KPHVNIGTIG…AVDSYIPTPQ (195 aa)) folds into the tr-type G domain. The G1 stretch occupies residues 19–26 (GHVDHGKT). A GTP-binding site is contributed by 19–26 (GHVDHGKT). T26 is a binding site for Mg(2+). The tract at residues 60–64 (GITIN) is G2. The interval 81–84 (DCPG) is G3. GTP contacts are provided by residues 81–85 (DCPGH) and 136–139 (NKCD). The tract at residues 136-139 (NKCD) is G4. The interval 174-176 (SAL) is G5.

The protein belongs to the TRAFAC class translation factor GTPase superfamily. Classic translation factor GTPase family. EF-Tu/EF-1A subfamily. In terms of assembly, monomer.

It localises to the cytoplasm. It carries out the reaction GTP + H2O = GDP + phosphate + H(+). Its function is as follows. GTP hydrolase that promotes the GTP-dependent binding of aminoacyl-tRNA to the A-site of ribosomes during protein biosynthesis. The protein is Elongation factor Tu of Symbiobacterium thermophilum (strain DSM 24528 / JCM 14929 / IAM 14863 / T).